The primary structure comprises 865 residues: Adenylate cyclase (865 aa).

The tract at residues 1-540 is catalytic; that stretch reads MYLYIETLKQ…DISSHFPIRL (540 aa). The tract at residues 546-865 is regulatory; the sequence is KALYSPCEIR…FNDYQAVHHH (320 aa).

It belongs to the adenylyl cyclase class-1 family.

It is found in the cytoplasm. It carries out the reaction ATP = 3',5'-cyclic AMP + diphosphate. This is Adenylate cyclase (cya) from Proteus mirabilis.